A 645-amino-acid polypeptide reads, in one-letter code: Sodium/potassium/calcium exchanger 3 (645 aa).

Positions 1–43 are cleaved as a signal peptide; sequence MPPPGDQDCARRRSRRRRRDLLLSQLCFLASVALLLWSLSSLR. Residues 44-106 are Extracellular-facing; it reads EQKELDLMDL…DIFSNEDRRQ (63 aa). N-linked (GlcNAc...) asparagine glycans are attached at residues Asn70 and Asn85. A helical transmembrane segment spans residues 107-127; the sequence is GAVVLHVLCAMYMFYALAIVC. Topologically, residues 128 to 151 are cytoplasmic; it reads DDFFVPSLEKICERLHLSEDVAGA. The Alpha-1 repeat unit spans residues 148-188; that stretch reads VAGATFMAAGSSAPELFTSVIGVFITKGDVGVGTIVGSAVF. A helical membrane pass occupies residues 152-172; the sequence is TFMAAGSSAPELFTSVIGVFI. The Extracellular segment spans residues 173–181; that stretch reads TKGDVGVGT. Residues 182 to 202 traverse the membrane as a helical segment; the sequence is IVGSAVFNILCIIGVCGLFAG. Residues 203 to 209 are Cytoplasmic-facing; it reads QVVALSS. A helical membrane pass occupies residues 210–230; sequence WCLLRDSIYYTLSVVALIVFI. Residues 231–234 lie on the Extracellular side of the membrane; that stretch reads YDEK. A helical transmembrane segment spans residues 235–255; sequence VSWWESLVLVLMYLIYIVIMK. Residues 256 to 486 lie on the Cytoplasmic side of the membrane; that stretch reads YNACIHQCFE…WFMVTFASST (231 aa). Ser307 bears the Phosphoserine mark. Disordered regions lie at residues 379–398 and 404–442; these read TVEN…NGTR and AETD…PFDP. Over residues 404–435 the composition is skewed to acidic residues; sequence AETDNETENENEDNENNENDEEEEEDEDDDEG. Residues 487-507 traverse the membrane as a helical segment; that stretch reads LWIAAFSYMMVWMVTIIGYTL. The Extracellular portion of the chain corresponds to 508–512; it reads GIPDV. The helical transmembrane segment at 513–533 threads the bilayer; that stretch reads IMGITFLAAGTSVPDCMASLI. Residues 520-551 form an Alpha-2 repeat; that stretch reads AAGTSVPDCMASLIVARQGMGDMAVSNSIGSN. The Cytoplasmic segment spans residues 534–551; the sequence is VARQGMGDMAVSNSIGSN. A helical transmembrane segment spans residues 552–572; sequence VFDILIGLGLPWALQTLAVDY. Topologically, residues 573–582 are extracellular; it reads GSYIRLNSRG. The chain crosses the membrane as a helical span at residues 583–603; that stretch reads LIYSVGLLLASVFVTVFGVHL. Residues 604 to 617 lie on the Cytoplasmic side of the membrane; it reads NKWQLDKKLGCGCL. The chain crosses the membrane as a helical span at residues 618–638; the sequence is FLYGVFLCFSIMTEFNVFTFV. The Extracellular segment spans residues 639–645; it reads NLPMCGD.

The protein belongs to the Ca(2+):cation antiporter (CaCA) (TC 2.A.19) family. SLC24A subfamily. In terms of tissue distribution, abundant in the brain. Highest levels found in selected thalamic nuclei, hippocampal CA1 neurons and in layer IV of the cerebral cortex. Expressed in dental tissues.

It localises to the cell membrane. The catalysed reaction is Ca(2+)(out) + K(+)(out) + 4 Na(+)(in) = Ca(2+)(in) + K(+)(in) + 4 Na(+)(out). Functionally, calcium, potassium:sodium antiporter that transports 1 Ca(2+) and 1 K(+) in exchange for 4 Na(+). The polypeptide is Sodium/potassium/calcium exchanger 3 (Slc24a3) (Mus musculus (Mouse)).